A 310-amino-acid polypeptide reads, in one-letter code: 4-hydroxyproline 2-epimerase (310 aa).

The active-site Proton acceptor is the Cys88. Residues 89-90 (GH), His208, and Asp232 contribute to the substrate site. The active-site Proton donor is Cys236. A substrate-binding site is contributed by 237–238 (GT).

This sequence belongs to the proline racemase family.

It carries out the reaction trans-4-hydroxy-L-proline = cis-4-hydroxy-D-proline. In terms of biological role, catalyzes the epimerization of trans-4-hydroxy-L-proline (t4LHyp) to cis-4-hydroxy-D-proline (c4DHyp). Is likely involved in a degradation pathway that converts t4LHyp to alpha-ketoglutarate. Can also catalyze the dehydration of trans-3-hydroxy-L-proline (t3LHyp) to Delta(1)-pyrroline-2-carboxylate (Pyr2C), albeit with 42-fold lower efficiency. Displays no proline racemase activity. The polypeptide is 4-hydroxyproline 2-epimerase (Burkholderia thailandensis (strain ATCC 700388 / DSM 13276 / CCUG 48851 / CIP 106301 / E264)).